Consider the following 200-residue polypeptide: Casparian strip membrane protein 2 (200 aa).

Residues 1–37 lie on the Cytoplasmic side of the membrane; the sequence is MMKSDSVAIDVPESSSVAKRKAPFMANIRDENGGYKK. Residues 38 to 58 traverse the membrane as a helical segment; that stretch reads GLAIFDFILRLGAIAAALGAA. Residues 59 to 88 lie on the Extracellular side of the membrane; sequence STMGTSDETLPFFTQFFQFNAGYDDFPTFQ. Residues 89–109 traverse the membrane as a helical segment; that stretch reads FFVIAMAMVAGYLVLSLPFSI. Residues 110–121 are Cytoplasmic-facing; the sequence is VSICRPHAAGPR. A helical membrane pass occupies residues 122–142; the sequence is ILLFILDTVALTLNAAAGAAA. The Extracellular segment spans residues 143 to 175; it reads ADIVYLAHNGNQTTNWLAICLQFGDFCREVSGS. Asn-153 is a glycosylation site (N-linked (GlcNAc...) asparagine). A helical membrane pass occupies residues 176–196; sequence VVASFASVVILMVLVVMSGLA. Topologically, residues 197 to 200 are cytoplasmic; it reads LRRY.

Belongs to the Casparian strip membrane proteins (CASP) family. Homodimer and heterodimers.

The protein localises to the cell membrane. In terms of biological role, regulates membrane-cell wall junctions and localized cell wall deposition. Required for establishment of the Casparian strip membrane domain (CSD) and the subsequent formation of Casparian strips, a cell wall modification of the root endodermis that determines an apoplastic barrier between the intraorganismal apoplasm and the extraorganismal apoplasm and prevents lateral diffusion. The polypeptide is Casparian strip membrane protein 2 (Ricinus communis (Castor bean)).